The primary structure comprises 383 residues: Transcription termination factor Rho (383 aa).

Residues 1–22 are disordered; the sequence is MTIETTTKKRPRAARPPRPRES. Over residues 8-17 the composition is skewed to basic residues; the sequence is KKRPRAARPP. The Rho RNA-BD domain maps to 26-93; that stretch reads LETVAGLLDV…AEVESVNGST (68 aa). ATP contacts are provided by residues 132–137, 144–149, and Arg175; these read GKGQRG and KAGKTM.

The protein belongs to the Rho family. Homohexamer. The homohexamer assembles into an open ring structure.

Facilitates transcription termination by a mechanism that involves Rho binding to the nascent RNA, activation of Rho's RNA-dependent ATPase activity, and release of the mRNA from the DNA template. The chain is Transcription termination factor Rho from Streptosporangium roseum (strain ATCC 12428 / DSM 43021 / JCM 3005 / KCTC 9067 / NCIMB 10171 / NRRL 2505 / NI 9100).